The following is a 156-amino-acid chain: Small ribosomal subunit protein uS7 (156 aa).

Belongs to the universal ribosomal protein uS7 family. As to quaternary structure, part of the 30S ribosomal subunit. Contacts proteins S9 and S11.

One of the primary rRNA binding proteins, it binds directly to 16S rRNA where it nucleates assembly of the head domain of the 30S subunit. Is located at the subunit interface close to the decoding center, probably blocks exit of the E-site tRNA. In Treponema denticola (strain ATCC 35405 / DSM 14222 / CIP 103919 / JCM 8153 / KCTC 15104), this protein is Small ribosomal subunit protein uS7.